The primary structure comprises 188 residues: ADP-ribosylation factor K (188 aa).

GTP is bound by residues 34-40, 75-79, and 134-137; these read DGAGKST, DVGGQ, and NKQD.

This sequence belongs to the small GTPase superfamily. Arf family.

The protein localises to the golgi apparatus. GTP-binding protein that may be involved in protein trafficking. May modulate vesicle budding and uncoating within the Golgi apparatus. This Dictyostelium discoideum (Social amoeba) protein is ADP-ribosylation factor K (arrK).